Here is a 48-residue protein sequence, read N- to C-terminus: Large ribosomal subunit protein uL14 (48 aa).

It belongs to the universal ribosomal protein uL14 family.

In Onchocerca volvulus, this protein is Large ribosomal subunit protein uL14 (RPL23).